Reading from the N-terminus, the 650-residue chain is Chaperone protein DnaK (650 aa).

T200 carries the post-translational modification Phosphothreonine; by autocatalysis. The span at A611–A636 shows a compositional bias: low complexity. A disordered region spans residues A611–D637.

Belongs to the heat shock protein 70 family.

Acts as a chaperone. This Burkholderia ambifaria (strain MC40-6) protein is Chaperone protein DnaK.